We begin with the raw amino-acid sequence, 173 residues long: Pyrimidine operon regulatory protein (173 aa).

Residues 40–41, 97–105, and Arg130 contribute to the substrate site; these read TR and DDVLYTGRT. The PRPP-binding motif lies at 93–105; that stretch reads VILVDDVLYTGRT.

This sequence belongs to the purine/pyrimidine phosphoribosyltransferase family. PyrR subfamily.

Regulates transcriptional attenuation of the pyrimidine nucleotide (pyr) operon in response to exogenous pyrimidines, probably by binding to specific sites on pyr mRNA. This probably disrupts an antiterminator hairpin in the RNA and favors formation of a downstream transcription terminator, leading to a reduced expression of downstream genes. The polypeptide is Pyrimidine operon regulatory protein (Lactococcus lactis subsp. lactis (strain IL1403) (Streptococcus lactis)).